The following is a 569-amino-acid chain: Peroxisomal targeting signal receptor (569 aa).

Cys9 is covalently cross-linked (Glycyl cysteine thioester (Cys-Gly) (interchain with G-Cter in ubiquitin)). The amphipathic helix 1 (AH1) stretch occupies residues 10-32; it reads AANANPLAQFFKQSQHDTSLEQS. A Glycyl lysine isopeptide (Lys-Gly) (interchain with G-Cter in ubiquitin) cross-link involves residue Lys21. Positions 23–42 are disordered; it reads SQHDTSLEQSLRNSAHDTHQ. The segment at 57–72 is amphipathic helix 2 (AH2); the sequence is RAHMEQFMNQSTPFNF. Short sequence motifs (wxxxF/Y motif) lie at residues 118–122 and 183–187; these read WSSEF and WEQQF. Residues 218-234 form an amphipathic helix 4 (AH4) region; the sequence is FDQVWDNIQETYADNML. Positions 243-247 match the WxxxF/Y motif 3 motif; it reads WEKDF. 7 TPR repeats span residues 272-305, 306-339, 340-377, 378-415, 416-449, 450-483, and 484-517; these read LDAY…NPGH, VDAW…SPQN, LVAL…VAER, ARNA…ANMD, SEVQ…NPND, ALAW…NPNF, and VRAR…HEVE.

Belongs to the peroxisomal targeting signal receptor family. Interacts (via WxxxF/Y and LVxEF motifs) with PEX14; promoting translocation through the PEX13-PEX14 docking complex. Monoubiquitinated at Cys-9 by PEX2 during PEX5 passage through the retrotranslocation channel: monoubiquitination acts as a signal for PEX5 extraction and is required for proper export from peroxisomes and recycling. When PEX5 recycling is compromised, polyubiquitinated at Lys-21 by PEX10 during its passage through the retrotranslocation channel, leading to its degradation.

The protein localises to the cytoplasm. The protein resides in the cytosol. It localises to the peroxisome matrix. Its function is as follows. Receptor that mediates peroxisomal import of proteins containing a C-terminal PTS1-type tripeptide peroxisomal targeting signal (SKL-type). Binds to cargo proteins containing a PTS1 peroxisomal targeting signal in the cytosol, and translocates them into the peroxisome matrix by passing through the PEX13-PEX14 docking complex along with cargo proteins. PEX5 receptor is then retrotranslocated into the cytosol, leading to release of bound cargo in the peroxisome matrix, and reset for a subsequent peroxisome import cycle. This Pichia angusta (Yeast) protein is Peroxisomal targeting signal receptor (PEX5).